Consider the following 316-residue polypeptide: Pantothenate kinase (316 aa).

95–102 contributes to the ATP binding site; it reads GSVSVGKS.

Belongs to the prokaryotic pantothenate kinase family.

The protein localises to the cytoplasm. The catalysed reaction is (R)-pantothenate + ATP = (R)-4'-phosphopantothenate + ADP + H(+). It functions in the pathway cofactor biosynthesis; coenzyme A biosynthesis; CoA from (R)-pantothenate: step 1/5. The protein is Pantothenate kinase of Haemophilus ducreyi (strain 35000HP / ATCC 700724).